A 1268-amino-acid polypeptide reads, in one-letter code: Vigilin (1268 aa).

S2 bears the N-acetylserine mark. T8 carries the phosphothreonine modification. A phosphoserine mark is found at S11 and S31. 7 KH domains span residues 150–212 (QASA…RHEV), 222–284 (RAVE…VARI), 295–357 (TTTI…LTEV), 364–424 (FTVS…QEQI), 435–497 (MDYV…KREL), 507–570 (ERTK…TKYM), and 581–643 (SYSI…RSRI). Phosphothreonine occurs at positions 295 and 296. S317 is modified (phosphoserine). Phosphotyrosine is present on Y437. S645 carries the post-translational modification Phosphoserine. KH domains lie at 653 to 716 (IAEV…KKQL), 727 to 790 (SFTV…QKEL), 800 to 863 (VVED…KKRI), 873 to 967 (QVTV…KEAL), 972 to 1034 (PVTI…KAGL), 1052 to 1117 (SFKL…RDAI), and 1127 to 1190 (MVSE…IDHI). The disordered stretch occupies residues 910–947 (PDREENPVHSVEPSIQENGDEAGEGREAKETDPGSPRR). Residues 932-947 (GEGREAKETDPGSPRR) are compositionally biased toward basic and acidic residues. Residue K991 is modified to N6-acetyllysine. A disordered region spans residues 1213–1268 (PPAHEESRAPSKGFVVRDAPWTSNSSEKAPDMSSSEEFPSFGAQVAPKTLPWGPKR). The segment covering 1233–1249 (WTSNSSEKAPDMSSSEE) has biased composition (polar residues). S1247 and S1252 each carry phosphoserine.

The protein resides in the cytoplasm. Its subcellular location is the nucleus. Its function is as follows. Appears to play a role in cell sterol metabolism. It may function to protect cells from over-accumulation of cholesterol. This Mus musculus (Mouse) protein is Vigilin (Hdlbp).